A 155-amino-acid chain; its full sequence is Ribonuclease H (155 aa).

The 142-residue stretch at 1 to 142 (MLKQVEIFTD…CDELARAAAM (142 aa)) folds into the RNase H type-1 domain. Mg(2+) contacts are provided by Asp10, Glu48, Asp70, and Asp134.

Belongs to the RNase H family. Monomer. It depends on Mg(2+) as a cofactor.

The protein resides in the cytoplasm. The enzyme catalyses Endonucleolytic cleavage to 5'-phosphomonoester.. Endonuclease that specifically degrades the RNA of RNA-DNA hybrids. This Escherichia coli (strain 55989 / EAEC) protein is Ribonuclease H.